The sequence spans 581 residues: Estrogen receptor (581 aa).

Residues 1 to 144 are modulating; sequence MYPEDSRVSG…GFEMAKEMRF (144 aa). Disordered stretches follow at residues 45-66 and 99-123; these read APLD…SGPN and RSSV…DSYS. Over residues 56–66 the composition is skewed to polar residues; sequence GSLQSLGSGPN. A DNA-binding region (nuclear receptor) is located at residues 142-217; it reads MRFCAVCSDY…VGMMKGGVRK (76 aa). 2 NR C4-type zinc fingers span residues 145-165 and 181-200; these read CAVC…CEGC and CPAT…CQAC. Residues 211-272 are hinge; sequence MKGGVRKDRG…GGGKSSVISM (62 aa). The segment covering 216–246 has biased composition (basic and acidic residues); that stretch reads RKDRGRVLRRDKRRTGTSDRDKASKGLEHRT. The disordered stretch occupies residues 216–269; that stretch reads RKDRGRVLRRDKRRTGTSDRDKASKGLEHRTAPPQDRRKHISSSAGGGGGKSSV. The region spanning 273 to 509 is the NR LBD domain; it reads PPDQVLLLLR…DLLLEMLDAH (237 aa). A compositionally biased stretch (basic and acidic residues) spans 514–528; the sequence is PDRPAETWSQADREP. The disordered stretch occupies residues 514–581; the sequence is PDRPAETWSQ…VHPHPMKPTE (68 aa). Residues 572–581 show a composition bias toward basic residues; that stretch reads VHPHPMKPTE.

The protein belongs to the nuclear hormone receptor family. NR3 subfamily. Binds DNA as a homodimer. Can form a heterodimer with ER-beta.

Its subcellular location is the nucleus. The steroid hormones and their receptors are involved in the regulation of eukaryotic gene expression and affect cellular proliferation and differentiation in target tissues. In Sparus aurata (Gilthead sea bream), this protein is Estrogen receptor (esr1).